The primary structure comprises 673 residues: MEGVKFPFGGIINDFNGRRKCYKQDWLAAFNSGVRILAPTLYIFIASALPVIAFGEQLSRETDRSLGIAESLASTALCGIIHSVFGGQPLLIVGVAEPTIIMYTYLHSFSKSRPELGQKLYLAWAGWVCVWTAVLLMLLAMLNACNIISRFTRIAGELFGMLITVLFIQEAVKGLIGEFLVPKSDDPSLEVYQFQWRYTNGLLAVIFSFGLLYTALKSRRARSWKYGFRWMRGFIGDYGTLLMLVLWSAFSYTVPRNLPEGVPRRLELPLPWASESLYHWTVVKDMAKVPPLYILAAFIPAIMIAGLYFFDHCVSAQMAQQKEFNLKNPTAYHYDIFILGIMTLICGLLGLPPSNGVIPQSPMHTKSLAVLKKQQMRKKMVQKAKECMREKASNSEIYGRMQDVFIEMETSPKATSVVKELENLKEAVMKADDGGGETKGKKFDPEVHIEDHLPVRVNEQRVSNLLQSVLVGLLILAVPVLRMIPTSVLWGYFTYMAVDSLPGNQFWERLQLLFITPGRRFKVLEGLHASFVEIVPYKSIVMFTLFQLLYFLICYGVTWIPVGGILFPLPFFILIALRQYILQRLFDPSHLQVLDSSEYEEMVGAPQRNSSFGFNGELREAHNIPLSVVENSEDEFYDAEILDEITTSRGELKHRTLSVKEDRSQMVKIYNHS.

The Cytoplasmic segment spans residues 1-35; sequence MEGVKFPFGGIINDFNGRRKCYKQDWLAAFNSGVR. Residues 36–56 form a helical membrane-spanning segment; it reads ILAPTLYIFIASALPVIAFGE. The Extracellular portion of the chain corresponds to 57–75; sequence QLSRETDRSLGIAESLAST. Residues 76 to 96 form a helical membrane-spanning segment; it reads ALCGIIHSVFGGQPLLIVGVA. Residues 97 to 121 lie on the Cytoplasmic side of the membrane; it reads EPTIIMYTYLHSFSKSRPELGQKLY. The helical transmembrane segment at 122–142 threads the bilayer; that stretch reads LAWAGWVCVWTAVLLMLLAML. Residues 143–160 are Extracellular-facing; sequence NACNIISRFTRIAGELFG. Residues 161-181 form a helical membrane-spanning segment; that stretch reads MLITVLFIQEAVKGLIGEFLV. Residues 182-197 are Cytoplasmic-facing; the sequence is PKSDDPSLEVYQFQWR. The chain crosses the membrane as a helical span at residues 198–218; it reads YTNGLLAVIFSFGLLYTALKS. Over 219-233 the chain is Extracellular; sequence RRARSWKYGFRWMRG. Residues 234-254 traverse the membrane as a helical segment; it reads FIGDYGTLLMLVLWSAFSYTV. Over 255-289 the chain is Cytoplasmic; it reads PRNLPEGVPRRLELPLPWASESLYHWTVVKDMAKV. Residues 290 to 310 form a helical membrane-spanning segment; the sequence is PPLYILAAFIPAIMIAGLYFF. Residues 311–330 are Extracellular-facing; that stretch reads DHCVSAQMAQQKEFNLKNPT. The chain crosses the membrane as a helical span at residues 331–351; sequence AYHYDIFILGIMTLICGLLGL. Over 352–468 the chain is Cytoplasmic; the sequence is PPSNGVIPQS…EQRVSNLLQS (117 aa). The chain crosses the membrane as a helical span at residues 469-489; that stretch reads VLVGLLILAVPVLRMIPTSVL. Over 490-556 the chain is Extracellular; the sequence is WGYFTYMAVD…QLLYFLICYG (67 aa). The chain crosses the membrane as a helical span at residues 557–577; sequence VTWIPVGGILFPLPFFILIAL. Topologically, residues 578–673 are cytoplasmic; it reads RQYILQRLFD…SQMVKIYNHS (96 aa).

Belongs to the anion exchanger (TC 2.A.31.3) family.

It is found in the membrane. Functionally, putative boron transporter. Boron is essential for maintaining the integrity of plants cell walls. This chain is Probable boron transporter 7 (BOR7), found in Arabidopsis thaliana (Mouse-ear cress).